A 246-amino-acid chain; its full sequence is E3 ubiquitin-protein ligase MARCHF2 (246 aa).

An RING-CH-type zinc finger spans residues 56 to 116; that stretch reads DSQSDCPFCR…ELCHTEFAVE (61 aa). Residues cysteine 64, cysteine 67, cysteine 80, cysteine 82, histidine 90, cysteine 93, cysteine 106, and cysteine 109 each contribute to the Zn(2+) site. The segment at 121 to 246 is required for interaction with IKBKG; sequence PLTEWLKDPG…LKKVAEETPV (126 aa). 2 helical membrane-spanning segments follow: residues 138–158 and 175–195; these read LCCDMVCFVFITPLAAISGWL and AVGLIALTIALFTIYVLWTLV.

As to quaternary structure, interacts with STX6; the interaction promotes MARCHF2-mediated ubiquitination and degradation of CFTR. Interacts with MARCHF3. Interacts with GOPC/CAL; the interaction leads to CFTR ubiquitination and degradation. Interacts with CFTR; the interaction leads to CFTR ubiqtuitination and degradation. Interacts (via PDZ domain) with DLG1 (via PDZ domains); the interaction leads to DLG1 ubiqtuitination and degradation. Interacts with ERGIC3. Interacts with ADRB2. Interacts with IKBKG/NEMO; during the late stages of macrophage viral and bacterial infection; the interaction leads to ubiquitination and degradation of IKBKG/NEMO.

It localises to the endoplasmic reticulum membrane. Its subcellular location is the lysosome membrane. It is found in the endosome membrane. The protein resides in the golgi apparatus membrane. The protein localises to the cytoplasm. It localises to the cell membrane. It carries out the reaction S-ubiquitinyl-[E2 ubiquitin-conjugating enzyme]-L-cysteine + [acceptor protein]-L-lysine = [E2 ubiquitin-conjugating enzyme]-L-cysteine + N(6)-ubiquitinyl-[acceptor protein]-L-lysine.. The protein operates within protein modification; protein ubiquitination. Its function is as follows. E3 ubiquitin-protein ligase that may mediate ubiquitination of TFRC and CD86, and promote their subsequent endocytosis and sorting to lysosomes via multivesicular bodies. E3 ubiquitin ligases accept ubiquitin from an E2 ubiquitin-conjugating enzyme in the form of a thioester and then directly transfer the ubiquitin to targeted substrates. Together with GOPC/CAL mediates the ubiquitination and lysosomal degradation of CFTR. Ubiquitinates and therefore mediates the degradation of DLG1. Regulates the intracellular trafficking and secretion of alpha1-antitrypsin/SERPINA1 and HP/haptoglobin via ubiquitination and degradation of the cargo receptor ERGIC3. Negatively regulates the antiviral and antibacterial immune response by repression of the NF-kB and type 1 IFN signaling pathways, via MARCHF2-mediated K48-linked polyubiquitination of IKBKG/NEMO, resulting in its proteasomal degradation. May be involved in endosomal trafficking through interaction with STX6. This chain is E3 ubiquitin-protein ligase MARCHF2 (Marchf2), found in Mus musculus (Mouse).